A 270-amino-acid polypeptide reads, in one-letter code: Diaminopimelate epimerase (270 aa).

Asparagine 15, glutamine 49, and asparagine 66 together coordinate substrate. Cysteine 75 serves as the catalytic Proton donor. Substrate is bound by residues 76 to 77 (GN), asparagine 155, asparagine 187, and 204 to 205 (ER). Residue cysteine 213 is the Proton acceptor of the active site. A substrate-binding site is contributed by 214–215 (GS).

The protein belongs to the diaminopimelate epimerase family. As to quaternary structure, homodimer.

The protein localises to the cytoplasm. It carries out the reaction (2S,6S)-2,6-diaminopimelate = meso-2,6-diaminopimelate. The protein operates within amino-acid biosynthesis; L-lysine biosynthesis via DAP pathway; DL-2,6-diaminopimelate from LL-2,6-diaminopimelate: step 1/1. In terms of biological role, catalyzes the stereoinversion of LL-2,6-diaminopimelate (L,L-DAP) to meso-diaminopimelate (meso-DAP), a precursor of L-lysine and an essential component of the bacterial peptidoglycan. The chain is Diaminopimelate epimerase from Rickettsia conorii (strain ATCC VR-613 / Malish 7).